The chain runs to 325 residues: Glucosyl-3-phosphoglycerate synthase (325 aa).

UDP-alpha-D-glucose is bound by residues 37–41 (PSLNE), serine 71, lysine 104, and 124–125 (DS). Mn(2+) is bound at residue aspartate 126. 171–174 (GRVT) lines the (2R)-3-phosphoglycerate pocket. Residues 216–219 (YGVE) and 243–248 (RIHDNQ) contribute to the UDP-alpha-D-glucose site. Histidine 245 contacts Mn(2+). Asparagine 247 contributes to the (2R)-3-phosphoglycerate binding site.

This sequence belongs to the glycosyltransferase 2 family. Homodimer in solution. Co(2+) is required as a cofactor. The cofactor is Mg(2+). Mn(2+) serves as cofactor. Requires Ni(2+) as cofactor. It depends on Zn(2+) as a cofactor.

The enzyme catalyses an NDP-alpha-D-glucose + (2R)-3-phosphoglycerate = (2R)-2-O-(alpha-D-glucopyranosyl)-3-phospho-glycerate + a ribonucleoside 5'-diphosphate + H(+). It carries out the reaction (2R)-3-phosphoglycerate + UDP-alpha-D-glucose = (2R)-2-O-(alpha-D-glucopyranosyl)-3-phospho-glycerate + UDP + H(+). The catalysed reaction is ADP-alpha-D-glucose + (2R)-3-phosphoglycerate = (2R)-2-O-(alpha-D-glucopyranosyl)-3-phospho-glycerate + ADP + H(+). Its activity is regulated as follows. Inhibited by ADP and EDTA. In terms of biological role, involved in the biosynthesis of the compatible solute mannosylglucosylglycerate through a phosphorylating pathway. Catalyzes the transfer of the glucose moiety from a nuleotide sugar such as UDP-alpha-D-glucose to the position 2 of 3-phospho-D-glycerate (3-PGA) to form glucosyl-3-phosphoglycerate (GPG). UDP-glucose is the preferred substrate, but it can be partially replaced by ADP-glucose. In Petrotoga mobilis (strain DSM 10674 / SJ95), this protein is Glucosyl-3-phosphoglycerate synthase.